The primary structure comprises 160 residues: Dihydrofolate reductase (160 aa).

The 160-residue stretch at 1 to 160 folds into the DHFR domain; it reads MVKAIWAMDQ…KVAYYHKIAR (160 aa). 5-7 is a binding site for substrate; the sequence is IWA. NADP(+) contacts are provided by residues 6–7 and 14–19; these read WA and IGNGNS. The substrate site is built by E27 and R32. 43–46 is an NADP(+) binding site; it reads GSAT. R57 is a binding site for substrate. NADP(+) is bound by residues 62–65 and 101–106; these read LTRN and CGGAQV. Residue S120 participates in substrate binding.

This sequence belongs to the dihydrofolate reductase family.

The catalysed reaction is (6S)-5,6,7,8-tetrahydrofolate + NADP(+) = 7,8-dihydrofolate + NADPH + H(+). The protein operates within cofactor biosynthesis; tetrahydrofolate biosynthesis; 5,6,7,8-tetrahydrofolate from 7,8-dihydrofolate: step 1/1. Its function is as follows. Key enzyme in folate metabolism. Catalyzes an essential reaction for de novo glycine and purine synthesis, and for DNA precursor synthesis. This is Dihydrofolate reductase (folA) from Mycoplasma pneumoniae (strain ATCC 29342 / M129 / Subtype 1) (Mycoplasmoides pneumoniae).